Reading from the N-terminus, the 175-residue chain is Peptidyl-prolyl cis-trans isomerase B (175 aa).

One can recognise a PPIase cyclophilin-type domain in the interval 3–172 (EQLYATLKTN…EDVVIESVVV (170 aa)).

This sequence belongs to the cyclophilin-type PPIase family.

Its subcellular location is the cytoplasm. It catalyses the reaction [protein]-peptidylproline (omega=180) = [protein]-peptidylproline (omega=0). With respect to regulation, inhibited by cyclosporin A (CsA). Its function is as follows. PPIases accelerate the folding of proteins. It catalyzes the cis-trans isomerization of proline imidic peptide bonds in oligopeptides. The sequence is that of Peptidyl-prolyl cis-trans isomerase B (cypB) from Streptomyces anulatus (Streptomyces chrysomallus).